The primary structure comprises 180 residues: Shikimate kinase (180 aa).

19–24 (GAGKTT) contacts ATP. Mg(2+) is bound at residue Thr23. Residues Asp41, Arg65, and Gly87 each coordinate substrate. Position 125 (Arg125) interacts with ATP. A substrate-binding site is contributed by Arg144.

Belongs to the shikimate kinase family. As to quaternary structure, monomer. Mg(2+) serves as cofactor.

The protein localises to the cytoplasm. The catalysed reaction is shikimate + ATP = 3-phosphoshikimate + ADP + H(+). It functions in the pathway metabolic intermediate biosynthesis; chorismate biosynthesis; chorismate from D-erythrose 4-phosphate and phosphoenolpyruvate: step 5/7. Functionally, catalyzes the specific phosphorylation of the 3-hydroxyl group of shikimic acid using ATP as a cosubstrate. The chain is Shikimate kinase from Acinetobacter baylyi (strain ATCC 33305 / BD413 / ADP1).